A 148-amino-acid chain; its full sequence is Single-stranded DNA-binding protein, mitochondrial (148 aa).

The N-terminal 16 residues, 1–16 (MFRRPALQVLRQFVRH), are a transit peptide targeting the mitochondrion. In terms of domain architecture, SSB spans 30-141 (LNRVQLLGRV…IIADNIVFLS (112 aa)). Residues S67 and S79 each carry the phosphoserine modification. The residue at position 113 (K113) is an N6-acetyllysine. N6-succinyllysine is present on K122.

In terms of assembly, homotetramer. Interacts with MPG/AAG, through inhibition of its glycosylase activity it potentially prevents formation of DNA breaks in ssDNA, ensuring that base removal primarily occurs in dsDNA. Interacts with POLDIP2. Interacts with PRIMPOL.

The protein resides in the mitochondrion. It is found in the mitochondrion matrix. The protein localises to the mitochondrion nucleoid. Its function is as follows. Binds preferentially and cooperatively to pyrimidine rich single-stranded DNA (ss-DNA). In vitro, required to maintain the copy number of mitochondrial DNA (mtDNA) and plays a crucial role during mtDNA replication by stimulating the activity of the replisome components POLG and TWNK at the replication fork. Promotes the activity of the gamma complex polymerase POLG, largely by organizing the template DNA and eliminating secondary structures to favor ss-DNA conformations that facilitate POLG activity. In addition it is able to promote the 5'-3' unwinding activity of the mtDNA helicase TWNK. May also function in mtDNA repair. This chain is Single-stranded DNA-binding protein, mitochondrial (SSBP1), found in Oryctolagus cuniculus (Rabbit).